Here is a 754-residue protein sequence, read N- to C-terminus: 1,4-alpha-glucan branching enzyme GlgB (754 aa).

The Nucleophile role is filled by Asp-431. The Proton donor role is filled by Glu-484.

The protein belongs to the glycosyl hydrolase 13 family. GlgB subfamily. Monomer.

The catalysed reaction is Transfers a segment of a (1-&gt;4)-alpha-D-glucan chain to a primary hydroxy group in a similar glucan chain.. It functions in the pathway glycan biosynthesis; glycogen biosynthesis. Its function is as follows. Catalyzes the formation of the alpha-1,6-glucosidic linkages in glycogen by scission of a 1,4-alpha-linked oligosaccharide from growing alpha-1,4-glucan chains and the subsequent attachment of the oligosaccharide to the alpha-1,6 position. In Prochlorococcus marinus (strain AS9601), this protein is 1,4-alpha-glucan branching enzyme GlgB.